The sequence spans 275 residues: Light-independent protochlorophyllide reductase iron-sulfur ATP-binding protein (275 aa).

ATP contacts are provided by residues 12–17 (GIGKST) and Lys-41. Ser-16 is a binding site for Mg(2+). [4Fe-4S] cluster-binding residues include Cys-97 and Cys-131. ATP is bound at residue 182-183 (NR).

Belongs to the NifH/BchL/ChlL family. As to quaternary structure, homodimer. Protochlorophyllide reductase is composed of three subunits; BchL, BchN and BchB. [4Fe-4S] cluster serves as cofactor.

The enzyme catalyses chlorophyllide a + oxidized 2[4Fe-4S]-[ferredoxin] + 2 ADP + 2 phosphate = protochlorophyllide a + reduced 2[4Fe-4S]-[ferredoxin] + 2 ATP + 2 H2O. The protein operates within porphyrin-containing compound metabolism; bacteriochlorophyll biosynthesis (light-independent). In terms of biological role, component of the dark-operative protochlorophyllide reductase (DPOR) that uses Mg-ATP and reduced ferredoxin to reduce ring D of protochlorophyllide (Pchlide) to form chlorophyllide a (Chlide). This reaction is light-independent. The L component serves as a unique electron donor to the NB-component of the complex, and binds Mg-ATP. The sequence is that of Light-independent protochlorophyllide reductase iron-sulfur ATP-binding protein from Chlorobium phaeovibrioides (strain DSM 265 / 1930) (Prosthecochloris vibrioformis (strain DSM 265)).